The chain runs to 415 residues: Protein fuzzy homolog (415 aa).

It belongs to the fuzzy family. Component of the CPLANE (ciliogenesis and planar polarity effectors) complex, composed of INTU, FUZ and WDPCP. Interacts with CPLANE1. Interacts with CPLANE2. Expressed in dermal and epidermal cells.

Its subcellular location is the cytoplasm. The protein localises to the cytoskeleton. The protein resides in the cilium basal body. Its function is as follows. Probable planar cell polarity effector involved in cilium biogenesis. May regulate protein and membrane transport to the cilium. Proposed to function as core component of the CPLANE (ciliogenesis and planar polarity effectors) complex involved in the recruitment of peripheral IFT-A proteins to basal bodies. May regulate the morphogenesis of hair follicles which depends on functional primary cilia. Binds phosphatidylinositol 3-phosphate with highest affinity, followed by phosphatidylinositol 4-phosphate and phosphatidylinositol 5-phosphate. This is Protein fuzzy homolog (Fuz) from Mus musculus (Mouse).